Here is a 241-residue protein sequence, read N- to C-terminus: 1-(5-phosphoribosyl)-5-[(5-phosphoribosylamino)methylideneamino] imidazole-4-carboxamide isomerase (241 aa).

Asp8 (proton acceptor) is an active-site residue. Asp130 serves as the catalytic Proton donor.

It belongs to the HisA/HisF family.

The protein resides in the cytoplasm. The enzyme catalyses 1-(5-phospho-beta-D-ribosyl)-5-[(5-phospho-beta-D-ribosylamino)methylideneamino]imidazole-4-carboxamide = 5-[(5-phospho-1-deoxy-D-ribulos-1-ylimino)methylamino]-1-(5-phospho-beta-D-ribosyl)imidazole-4-carboxamide. The protein operates within amino-acid biosynthesis; L-histidine biosynthesis; L-histidine from 5-phospho-alpha-D-ribose 1-diphosphate: step 4/9. The chain is 1-(5-phosphoribosyl)-5-[(5-phosphoribosylamino)methylideneamino] imidazole-4-carboxamide isomerase from Leptospira borgpetersenii serovar Hardjo-bovis (strain JB197).